Here is a 1111-residue protein sequence, read N- to C-terminus: Receptor-type guanylate cyclase gcy-7 (1111 aa).

The first 24 residues, Met-1–Pro-24, serve as a signal peptide directing secretion. Residues Gln-25–Leu-488 are Extracellular-facing. N-linked (GlcNAc...) asparagine glycosylation is found at Asn-80, Asn-300, Asn-326, Asn-353, Asn-389, Asn-407, Asn-430, and Asn-441. Residues Ile-489–Ile-509 traverse the membrane as a helical segment. Residues Tyr-510 to Asp-1111 lie on the Cytoplasmic side of the membrane. Residues Gln-536–Asn-838 form the Protein kinase domain. ATP-binding positions include Lys-542–Arg-550 and Lys-568. A Guanylate cyclase domain is found at Thr-896–Glu-1026.

The protein belongs to the adenylyl cyclase class-4/guanylyl cyclase family. As to expression, expressed asymmetrically in ASE left (ASEL) sensory neuron. Expressed in excretory canal cell.

The protein localises to the cell membrane. The catalysed reaction is GTP = 3',5'-cyclic GMP + diphosphate. Functionally, guanylate cyclase involved in the production of the second messenger cGMP. Unlike other guanylate cyclases expressed in ASE neurons, may not play a role in chemotaxis responses toward salt ions in ASEL (ASE left) sensory neurons. This chain is Receptor-type guanylate cyclase gcy-7, found in Caenorhabditis elegans.